The sequence spans 235 residues: Large ribosomal subunit protein uL1 (235 aa).

Belongs to the universal ribosomal protein uL1 family. As to quaternary structure, part of the 50S ribosomal subunit.

Binds directly to 23S rRNA. The L1 stalk is quite mobile in the ribosome, and is involved in E site tRNA release. Functionally, protein L1 is also a translational repressor protein, it controls the translation of the L11 operon by binding to its mRNA. The protein is Large ribosomal subunit protein uL1 of Rhodospirillum centenum (strain ATCC 51521 / SW).